The primary structure comprises 131 residues: MSEIPADLSYTEEHEWVQRTGDDTVRVGITDYAQAALGDVVFVQLPDVDAALTAGESFGEVESTKSVSDLYAPLTAKVVAVNGDLESNPQLVNSDPYGEGWLVELQADSASLDAALAELFDAEGYRGHVAD.

Positions 24 to 106 constitute a Lipoyl-binding domain; sequence TVRVGITDYA…YGEGWLVELQ (83 aa). Position 65 is an N6-lipoyllysine (Lys-65).

The protein belongs to the GcvH family. The glycine cleavage system is composed of four proteins: P, T, L and H. (R)-lipoate serves as cofactor.

In terms of biological role, the glycine cleavage system catalyzes the degradation of glycine. The H protein shuttles the methylamine group of glycine from the P protein to the T protein. This is Glycine cleavage system H protein from Mycolicibacterium gilvum (strain PYR-GCK) (Mycobacterium gilvum (strain PYR-GCK)).